The sequence spans 221 residues: Thiamine-phosphate synthase (221 aa).

Residues 49–53 and Asn85 each bind 4-amino-2-methyl-5-(diphosphooxymethyl)pyrimidine; that span reads QFREK. The Mg(2+) site is built by Asp86 and Asp105. Ser124 contacts 4-amino-2-methyl-5-(diphosphooxymethyl)pyrimidine. 151 to 153 contributes to the 2-[(2R,5Z)-2-carboxy-4-methylthiazol-5(2H)-ylidene]ethyl phosphate binding site; it reads TQS. Position 154 (Lys154) interacts with 4-amino-2-methyl-5-(diphosphooxymethyl)pyrimidine. Residues Gly183 and 203 to 204 contribute to the 2-[(2R,5Z)-2-carboxy-4-methylthiazol-5(2H)-ylidene]ethyl phosphate site; that span reads IS.

This sequence belongs to the thiamine-phosphate synthase family. Mg(2+) is required as a cofactor.

The enzyme catalyses 2-[(2R,5Z)-2-carboxy-4-methylthiazol-5(2H)-ylidene]ethyl phosphate + 4-amino-2-methyl-5-(diphosphooxymethyl)pyrimidine + 2 H(+) = thiamine phosphate + CO2 + diphosphate. The catalysed reaction is 2-(2-carboxy-4-methylthiazol-5-yl)ethyl phosphate + 4-amino-2-methyl-5-(diphosphooxymethyl)pyrimidine + 2 H(+) = thiamine phosphate + CO2 + diphosphate. It catalyses the reaction 4-methyl-5-(2-phosphooxyethyl)-thiazole + 4-amino-2-methyl-5-(diphosphooxymethyl)pyrimidine + H(+) = thiamine phosphate + diphosphate. Its pathway is cofactor biosynthesis; thiamine diphosphate biosynthesis; thiamine phosphate from 4-amino-2-methyl-5-diphosphomethylpyrimidine and 4-methyl-5-(2-phosphoethyl)-thiazole: step 1/1. Condenses 4-methyl-5-(beta-hydroxyethyl)thiazole monophosphate (THZ-P) and 2-methyl-4-amino-5-hydroxymethyl pyrimidine pyrophosphate (HMP-PP) to form thiamine monophosphate (TMP). The protein is Thiamine-phosphate synthase of Histophilus somni (strain 129Pt) (Haemophilus somnus).